The sequence spans 677 residues: WD repeat-containing protein 48 (677 aa).

WD repeat units lie at residues 28–67 (YNRNGVNALQLDPALNRLFTAGRDSIIRIWSVNQHKQDPY), 73–112 (HHTDWVNDIILCCNGKTLISASSDTTVKVWNAHKGFCMST), 115–154 (THKDYVKALAYAKDKELVASAGLDRQIFLWDVNTLTALTA), 166–205 (GNKDSIYSLAMNQTGTVIISGSTEKVLRVWDPRTCAKLMK), 208–247 (GHTDNVKSLLLNRDGTQCLSGSSDGTIRLWSLGQQRCIAT), 250–289 (VHDEGVWALQVNEAFTHIYSGGRDRKIYCTDLRNPDMRVL), 292–334 (EEKA…NFRA), and 358–397 (KGGTSIVQCHILNDKRHILTKDTNNSVAFWDVLKACKGED). The segment at 611–632 (SQATSSSANDKPGEQEKEEDVS) is disordered.

The protein belongs to the WD repeat WDR48 family.

It is found in the nucleus. Its subcellular location is the cytoplasm. The protein localises to the lysosome. It localises to the late endosome. Its function is as follows. Regulator of deubiquitinating complexes, which acts as a strong activator of usp1, usp12 and usp46. Enhances the usp1-mediated deubiquitination of fancd2; usp1 being almost inactive by itself. Activates deubiquitination by increasing the catalytic turnover without increasing the affinity of deubiquitinating enzymes for the substrate. Also activates deubiquitinating activity of complexes containing usp12. Together with rad51ap1, promotes DNA repair by stimulating rad51-mediated homologous recombination. Binds single-stranded DNA (ssDNA) and double-stranded DNA (dsDNA). DNA-binding is required both for usp1-mediated deubiquitination of fancd2 and stimulation of rad51-mediated homologous recombination: both wdr48/uaf1 and rad51ap1 have coordinated role in DNA-binding during these processes. Together with atad5 and by regulating usp1 activity, has a role in pcna-mediated translesion synthesis (TLS) by deubiquitinating monoubiquitinated pcna. Together with atad5, has a role in recruiting rad51 to stalled forks during replication stress. The chain is WD repeat-containing protein 48 (wdr48) from Danio rerio (Zebrafish).